The sequence spans 153 residues: Troponin C (153 aa).

At alanine 1 the chain carries Blocked amino end (Ala). 4 EF-hand domains span residues 10-45 (EQVQMLRKAFDMFDRDKKGVIHTNMVSTILRTLGQT), 46-81 (FEEKDLKDLIAEIDQDGSGELEFEEFMALAARFLVE), 86-121 (AMQEELREAFRLYDKQGQGFINVSDLRDILRALDDK), and 122-153 (LTEDELDEMIAEIDTDGSGTVDFDEFMEMMTG). Ca(2+) is bound by residues aspartate 59, aspartate 61, serine 63, glutamate 65, glutamate 70, aspartate 99, aspartate 110, aspartate 135, aspartate 137, serine 139, threonine 141, and glutamate 146.

It belongs to the troponin C family.

In terms of biological role, troponin is the central regulatory protein of striated muscle contraction. Tn consists of three components: Tn-I which is the inhibitor of actomyosin ATPase, Tn-T which contains the binding site for tropomyosin and Tn-C. The binding of calcium to Tn-C abolishes the inhibitory action of Tn on actin filaments. The polypeptide is Troponin C (Tachypleus tridentatus (Japanese horseshoe crab)).